The sequence spans 161 residues: tRNA-acetylating toxin 1 (161 aa).

Positions 92, 94, 99, 100, 102, 104, 105, 132, and 135 each coordinate acetyl-CoA. Tyrosine 140 is a catalytic residue. Residue histidine 142 participates in acetyl-CoA binding.

Belongs to the acetyltransferase family. GNAT subfamily. As to quaternary structure, homodimer (in absence of antitoxin). Forms a complex with cognate antitoxin TacA1. Forms a 4:2 antitoxin:toxin complex with cognate antitoxin TacA1.

The catalysed reaction is glycyl-tRNA(Gly) + acetyl-CoA = N-acetylglycyl-tRNA(Gly) + CoA + H(+). In terms of biological role, toxic component of a type II toxin-antitoxin (TA) system. Acetylates tRNA and inhibits translation, does not acetylate uncharged tRNA. Upon expression in situ acetylates only Gly-tRNA(Gly). In vitro acetylates mainly Gly and Ile/Leu. Upon induction of the toxin gene in lag phase in rich medium (but not mid-exponential phase) the lag phase is extended by several hours, locking bacteria in a non-growth state. Neutralized only by cognate antitoxin TacA1 (A8), but not by TacA2 or TacA3. Its toxic effect is neutralized by expression of peptidyl-tRNA hydrolase (pth) in lag phase. NAD-dependent protein deacylase (cobB) also play a role in detoxifying TacT targets. Expression increases persister cell formation, which is also abolished by either cognate antitoxin or Pth expression. Plays a role in persister cell formation. Functionally, the TacA1-TacT1 complex binds (and probably represses) its own promoter DNA but not that of tacA3-tacT3, it does not repress the tacA3-tacT3 promoter. This Salmonella typhimurium (strain 14028s / SGSC 2262) protein is tRNA-acetylating toxin 1.